A 561-amino-acid polypeptide reads, in one-letter code: Putative periplasmic trehalase (561 aa).

Positions M1–A30 are cleaved as a signal peptide. Residues R148, W155–D156, N192, R201–Q203, R273–E275, and G306 each bind substrate. Catalysis depends on proton donor/acceptor residues D308 and E492. Substrate is bound at residue E507. The interval C535–P561 is disordered.

It belongs to the glycosyl hydrolase 37 family. As to quaternary structure, monomer.

The protein resides in the periplasm. The catalysed reaction is alpha,alpha-trehalose + H2O = alpha-D-glucose + beta-D-glucose. In terms of biological role, provides the cells with the ability to utilize trehalose at high osmolarity by splitting it into glucose molecules that can subsequently be taken up by the phosphotransferase-mediated uptake system. This is Putative periplasmic trehalase from Escherichia coli O157:H7.